The sequence spans 480 residues: Carboxy-terminal processing protease CtpB (480 aa).

The N-terminal stretch at 1-23 (MNQKIMAVIAAGSMLFGGAGVYA) is a signal peptide. Residues 92 to 182 (SVYMDKQTAK…SSVSMKIQRP (91 aa)) form the PDZ domain. The segment at 113 to 116 (GIGA) is peptide binding. S309 acts as the Nucleophile in catalysis. Catalysis depends on charge relay system residues K334 and Q338.

It belongs to the peptidase S41A family. In terms of assembly, homodimer. In terms of processing, is cleaved by SpoIVB in vitro and in vivo but this cleavage does not appear to be necessary for CtpB activation. CtpB can also cleave itself in vivo.

The protein resides in the forespore intermembrane space. The enzyme catalyses The enzyme shows specific recognition of a C-terminal tripeptide, Xaa-Yaa-Zaa, in which Xaa is preferably Ala or Leu, Yaa is preferably Ala or Tyr, and Zaa is preferably Ala, but then cleaves at a variable distance from the C-terminus. A typical cleavage is -Ala-Ala-|-Arg-Ala-Ala-Lys-Glu-Asn-Tyr-Ala-Leu-Ala-Ala.. With respect to regulation, activated by peptide binding to the PDZ domain. Involved in the signal transduction pathway leading to the proteolytic activation of the mother cell transcription factor pro-sigma-K during sporulation. The signaling serine protease CtpB triggers pro-sigma-K processing by cleaving the pre-processed regulatory protein SpoIVFA and is necessary for the proper timing of sigma-K activation. The chain is Carboxy-terminal processing protease CtpB (ctpB) from Bacillus subtilis (strain 168).